Consider the following 198-residue polypeptide: Thymidine kinase (198 aa).

ATP is bound by residues 16-23 (GGMYSGKS) and 89-92 (EEGQ). Residue Glu90 is the Proton acceptor of the active site. Zn(2+) contacts are provided by Cys146, Cys149, Cys184, and Cys187.

This sequence belongs to the thymidine kinase family. Homotetramer.

Its subcellular location is the cytoplasm. The enzyme catalyses thymidine + ATP = dTMP + ADP + H(+). The sequence is that of Thymidine kinase from Dictyoglomus thermophilum (strain ATCC 35947 / DSM 3960 / H-6-12).